Reading from the N-terminus, the 478-residue chain is Zinc metalloproteinase/disintegrin (478 aa).

A signal peptide spans 1–20; it reads MIQVLLVTICLAAFPYQGSS. Positions 21 to 187 are excised as a propeptide; sequence IILESGNVND…PIKKASHLNL (167 aa). In terms of domain architecture, Peptidase M12B spans 193-389; it reads RYVEIVIVVD…QKPQCILKKP (197 aa). Cystine bridges form between Cys304–Cys384, Cys344–Cys368, and Cys346–Cys351. Position 329 (His329) interacts with Zn(2+). Glu330 is a catalytic residue. Residues His333 and His339 each coordinate Zn(2+). The propeptide occupies 390–408; that stretch reads LRTDTVSTPVSGNELLEAR. The Disintegrin domain maps to 397–478; it reads TPVSGNELLE…ADCPRNVLYG (82 aa). Disulfide bonds link Cys411–Cys420, Cys413–Cys421, Cys426–Cys440, Cys434–Cys464, Cys439–Cys443, and Cys452–Cys471. A propeptide spanning residues 474 to 478 is cleaved from the precursor; that stretch reads NVLYG.

It belongs to the venom metalloproteinase (M12B) family. P-II subfamily. P-IIa sub-subfamily. It depends on Zn(2+) as a cofactor. As to expression, expressed by the venom gland.

It is found in the secreted. In terms of biological role, snake venom zinc metalloproteinase that causes hemorrhage by provoking the degradation of the sub-endothelial matrix proteins (fibronectin, laminin, type IV collagen, nidogen, and gelatins). Displays low cytotoxicity. In vitro, inhibits cancer cell migration (human breast cancer cell line MDA-MB-231) with a significant rate after 24 hours of incubation. The sequence is that of Zinc metalloproteinase/disintegrin (MPII) from Crotalus durissus collilineatus (Brazilian rattlesnake).